We begin with the raw amino-acid sequence, 466 residues long: Lipase 2 (466 aa).

Residues 1-16 form the signal peptide; sequence MKGLVFLLGLLPTIYA. Cys112 and Cys285 form a disulfide bridge. Ser196 serves as the catalytic Charge relay system. N-linked (GlcNAc...) asparagine glycosylation is found at Asn231, Asn319, and Asn331. Catalysis depends on charge relay system residues Asp348 and His381. A disulfide bridge connects residues Cys364 and Cys409. N-linked (GlcNAc...) asparagine glycans are attached at residues Asn422 and Asn451.

This sequence belongs to the AB hydrolase superfamily. Lipase family. Class Lip subfamily.

The protein resides in the secreted. The catalysed reaction is a triacylglycerol + H2O = a diacylglycerol + a fatty acid + H(+). In terms of biological role, secreted lipase that is able to hydrolyze both the neutral triacylglycerols and the monopalmitate ester Tween 40, allowing the use of hydrolyzed products as carbon sources. Has broad lipolytic activity, which may be important for colonization and subsequent infection, therefore contributing to the persistence and virulence in human tissue. My be important for alimentary tract colonization, but not oral infection. Facilitates invasive disease via lipid-based suppression of the IL-17 response. Inhibits IL-17 production indirectly by suppressing IL-23 production by tissue-resident dendritic cells. The chain is Lipase 2 from Candida albicans (strain SC5314 / ATCC MYA-2876) (Yeast).